Reading from the N-terminus, the 99-residue chain is Nucleoid-associated protein EbfC (99 aa).

This sequence belongs to the YbaB/EbfC family. In terms of assembly, homodimer. Can form tetramers and octamers in solution.

The protein localises to the cytoplasm. The protein resides in the nucleoid. In terms of biological role, binds to DNA and alters its conformation. May be involved in global regulation of gene expression. Binds specifically and non-specifically to DNA, preferentially to the 4 bp broken palindrome 5'-GTnAC-3'. Affects expression of a wide variety of genes, encoding both structural and metabolic proteins. In Borreliella burgdorferi (strain ATCC 35210 / DSM 4680 / CIP 102532 / B31) (Borrelia burgdorferi), this protein is Nucleoid-associated protein EbfC.